The following is a 379-amino-acid chain: Pectin lyase A (379 aa).

Residues 1 to 20 (MKTTFLVSLATAALSSTAAA) form the signal peptide. Disulfide bonds link Cys-83-Cys-102 and Cys-92-Cys-226. The active site involves Arg-256. Cys-323 and Cys-331 are oxidised to a cystine.

This sequence belongs to the polysaccharide lyase 1 family.

The protein localises to the secreted. It carries out the reaction Eliminative cleavage of (1-&gt;4)-alpha-D-galacturonan methyl ester to give oligosaccharides with 4-deoxy-6-O-methyl-alpha-D-galact-4-enuronosyl groups at their non-reducing ends.. Functionally, pectinolytic enzymes consist of four classes of enzymes: pectin lyase, polygalacturonase, pectin methylesterase and rhamnogalacturonase. Among pectinolytic enzymes, pectin lyase is the most important in depolymerization of pectin, since it cleaves internal glycosidic bonds of highly methylated pectins. This Emericella nidulans (strain FGSC A4 / ATCC 38163 / CBS 112.46 / NRRL 194 / M139) (Aspergillus nidulans) protein is Pectin lyase A (pelA).